The chain runs to 226 residues: MDTLTDRQREILELIRRSVAERGYPPTRAEICQSLGFRSPNAAESHLRALARKGAIEMRRGASRGIRLTDAFAGAAPEPSPATDDPNAGLPVVGRVAAGSPLLAEESIERYCQVDASLFSPPADYLLRVRGESMRDAGILDGDLLAVRRDTEARDGQIVVVRLHDEVTVKFLERCNGVLRLIPAHPDYPVIEVAADGQDAVLEGIGVGVLRSPLDPRGPEGNAASD.

The segment at residues 28–48 (RAEICQSLGFRSPNAAESHLR) is a DNA-binding region (H-T-H motif). Catalysis depends on for autocatalytic cleavage activity residues serine 133 and lysine 170.

Belongs to the peptidase S24 family. Homodimer.

The enzyme catalyses Hydrolysis of Ala-|-Gly bond in repressor LexA.. In terms of biological role, represses a number of genes involved in the response to DNA damage (SOS response), including recA and lexA. In the presence of single-stranded DNA, RecA interacts with LexA causing an autocatalytic cleavage which disrupts the DNA-binding part of LexA, leading to derepression of the SOS regulon and eventually DNA repair. This Halorhodospira halophila (strain DSM 244 / SL1) (Ectothiorhodospira halophila (strain DSM 244 / SL1)) protein is LexA repressor.